The sequence spans 89 residues: Small ribosomal subunit protein uS15 (89 aa).

This sequence belongs to the universal ribosomal protein uS15 family. As to quaternary structure, part of the 30S ribosomal subunit. Forms a bridge to the 50S subunit in the 70S ribosome, contacting the 23S rRNA.

In terms of biological role, one of the primary rRNA binding proteins, it binds directly to 16S rRNA where it helps nucleate assembly of the platform of the 30S subunit by binding and bridging several RNA helices of the 16S rRNA. Functionally, forms an intersubunit bridge (bridge B4) with the 23S rRNA of the 50S subunit in the ribosome. This Pectobacterium atrosepticum (strain SCRI 1043 / ATCC BAA-672) (Erwinia carotovora subsp. atroseptica) protein is Small ribosomal subunit protein uS15.